Consider the following 961-residue polypeptide: Thrombospondin-4 (961 aa).

An N-terminal signal peptide occupies residues 1–23 (MLAPRGATFLLLHLALQPWLGAG). In terms of domain architecture, Laminin G-like spans 24–192 (AQATPQVFDL…LEELKLVVRG (169 aa)). One can recognise an EGF-like 1 domain in the interval 286 to 325 (PVRRCDSNPCFRGVRCTDTRDGFQCGPCPEGYTGNGIVCS). 21 disulfide bridges follow: Cys290/Cys301, Cys295/Cys310, Cys313/Cys324, Cys330/Cys341, Cys335/Cys350, Cys353/Cys377, Cys383/Cys394, Cys388/Cys403, Cys406/Cys418, Cys424/Cys438, Cys432/Cys448, Cys450/Cys461, Cys477/Cys482, Cys487/Cys507, Cys523/Cys543, Cys546/Cys566, Cys582/Cys602, Cys605/Cys625, Cys643/Cys663, Cys683/Cys703, and Cys719/Cys940. Residues 326 to 363 (DVDECRYHPCYPGVRCVNLAPGFRCDACPVGFTGPMMQ) enclose the EGF-like 2; calcium-binding domain. The EGF-like 3; calcium-binding domain occupies 379–419 (DIDECRNGACVLNSICINTLGSYRCGPCKPGYIGDQMRGCK). Residues 420–462 (MERNCRDPELNPCSVNAQCIEERQGDVTCVCGVGWAGDGYICG) enclose the EGF-like 4 domain. 8 TSP type-3 repeats span residues 463–495 (KDVD…NSGQ), 496–531 (EDAD…NVDQ), 532–554 (RNSD…NNDQ), 555–590 (KDTD…NSDQ), 591–613 (EDRD…NPNQ), 614–651 (SDVD…NSAQ), 652–691 (LDTD…NPAQ), and 692–727 (EDSN…EVTL). The Cell attachment site motif lies at 562–564 (KGD). Residues 581–671 (NCQKVPNSDQ…ECDDDDDNDG (91 aa)) are disordered. Asn612 carries an N-linked (GlcNAc...) asparagine glycan. Residues 640–652 (TDNCPTVINSAQL) are compositionally biased toward polar residues. Positions 660–671 (GDECDDDDDNDG) are enriched in acidic residues. The TSP C-terminal domain maps to 731-945 (RAYQTVVLDP…LKYRCNDTIP (215 aa)). A glycan (N-linked (GlcNAc...) asparagine) is linked at Asn941.

It belongs to the thrombospondin family. As to quaternary structure, homopentamer; disulfide-linked. Interacts with PTBP3. Interacts (via EGF-like 3; calcium-binding domain) with ATF6 and facilitates its processing, activation and nuclear translocation. Interacts with NOTCH1.

The protein resides in the endoplasmic reticulum. The protein localises to the sarcoplasmic reticulum. It is found in the secreted. It localises to the extracellular space. Its subcellular location is the extracellular matrix. Functionally, adhesive glycoprotein that mediates cell-to-cell and cell-to-matrix interactions and is involved in various processes including cellular proliferation, migration, adhesion and attachment, inflammatory response to CNS injury, regulation of vascular inflammation and adaptive responses of the heart to pressure overload and in myocardial function and remodeling. Binds to structural extracellular matrix (ECM) proteins and modulates the ECM in response to tissue damage, contributing to cardioprotective and adaptive ECM remodeling. Plays a role in ER stress response, via its interaction with the activating transcription factor 6 alpha (ATF6) which produces adaptive ER stress response factors and protects myocardium from pressure overload. May contribute to spinal presynaptic hypersensitivity and neuropathic pain states after peripheral nerve injury. May play a role in regulating protective astrogenesis from the subventricular zone (SVZ) niche after injury in a NOTCH1-dependent manner. The protein is Thrombospondin-4 (THBS4) of Bos taurus (Bovine).